Consider the following 162-residue polypeptide: UPF0178 protein Rsph17029_2512 (162 aa).

The protein belongs to the UPF0178 family.

This is UPF0178 protein Rsph17029_2512 from Cereibacter sphaeroides (strain ATCC 17029 / ATH 2.4.9) (Rhodobacter sphaeroides).